A 427-amino-acid chain; its full sequence is Putative dipeptidase MCYG_02918 (427 aa).

The first 29 residues, Met1–Ala29, serve as a signal peptide directing secretion. The Zn(2+) site is built by His55, Asp57, and Glu167. Residues Cys106 and Cys196 are joined by a disulfide bond. A substrate-binding site is contributed by His194. Residues His238 and His259 each contribute to the Zn(2+) site. Residues Arg270 and Asp330 each coordinate substrate. N-linked (GlcNAc...) asparagine glycosylation is present at Asn402.

The protein belongs to the metallo-dependent hydrolases superfamily. Peptidase M19 family. Zn(2+) serves as cofactor.

The enzyme catalyses an L-aminoacyl-L-amino acid + H2O = 2 an L-alpha-amino acid. Hydrolyzes a wide range of dipeptides. This chain is Putative dipeptidase MCYG_02918, found in Arthroderma otae (strain ATCC MYA-4605 / CBS 113480) (Microsporum canis).